A 102-amino-acid polypeptide reads, in one-letter code: Co-chaperonin GroES (102 aa).

It belongs to the GroES chaperonin family. As to quaternary structure, heptamer of 7 subunits arranged in a ring. Interacts with the chaperonin GroEL.

It is found in the cytoplasm. Functionally, together with the chaperonin GroEL, plays an essential role in assisting protein folding. The GroEL-GroES system forms a nano-cage that allows encapsulation of the non-native substrate proteins and provides a physical environment optimized to promote and accelerate protein folding. GroES binds to the apical surface of the GroEL ring, thereby capping the opening of the GroEL channel. The chain is Co-chaperonin GroES from Streptomyces albus G.